A 302-amino-acid polypeptide reads, in one-letter code: Nucleotide-binding protein Bcenmc03_2806 (302 aa).

8 to 15 (GISGSGKS) serves as a coordination point for ATP. 57-60 (DARS) serves as a coordination point for GTP.

Belongs to the RapZ-like family.

Displays ATPase and GTPase activities. In Burkholderia orbicola (strain MC0-3), this protein is Nucleotide-binding protein Bcenmc03_2806.